We begin with the raw amino-acid sequence, 482 residues long: Abscisic acid 8'-hydroxylase 2 (482 aa).

The chain crosses the membrane as a helical span at residues 20-40 (PALITLTIVVVVVVLLFKWWL). C431 is a heme binding site.

Belongs to the cytochrome P450 family. The cofactor is heme. In terms of tissue distribution, mainly expressed in dry seeds. Lower expression in rosette leaves, flowers, siliques and stems. Not expressed in roots. Expressed in both endosperm and vascular tissues of embryo during the seed development and in cortex and endodermis in germinating embryo.

The protein localises to the membrane. It catalyses the reaction 2-cis-(+)-abscisate + reduced [NADPH--hemoprotein reductase] + O2 = (+)-8'-hydroxyabscisate + oxidized [NADPH--hemoprotein reductase] + H2O + H(+). The protein operates within plant hormone degradation; abscisic acid degradation. Its function is as follows. Involved in the oxidative degradation of abscisic acid, but not in the isomerization of the produced 8'-hydroxyabscisic acid (8'-OH-ABA) to (-)-phaseic acid (PA). Involved in the control of seed dormancy and germination. The sequence is that of Abscisic acid 8'-hydroxylase 2 (CYP707A2) from Arabidopsis thaliana (Mouse-ear cress).